The sequence spans 145 residues: Inner membrane protein YiaA (145 aa).

The Cytoplasmic segment spans residues 1–12 (MDNKISTYSPAF). A helical transmembrane segment spans residues 13 to 32 (SIVSWIALVGGIVTYLLGLW). Topologically, residues 33–41 (NAEMQLNEK) are periplasmic. Residues 42–59 (GYYFAVLVLGLFSAASYQ) traverse the membrane as a helical segment. Residues 60 to 71 (KTVRDKYEGIPT) are Cytoplasmic-facing. Residues 72 to 94 (TSIYYMTCLTVFIISVALLMVGL) traverse the membrane as a helical segment. Residues 95–98 (WNAT) lie on the Periplasmic side of the membrane. A helical transmembrane segment spans residues 99–121 (LLLSEKGFYGLAFFLSLFGAVAV). At 122–145 (QKNIRDAGINPPKETQVTQEEYSE) the chain is on the cytoplasmic side.

The protein localises to the cell inner membrane. This is Inner membrane protein YiaA (yiaA) from Escherichia coli (strain K12).